The following is a 461-amino-acid chain: Cysteine--tRNA ligase (461 aa).

C31 is a binding site for Zn(2+). Positions 33–43 match the 'HIGH' region motif; that stretch reads PTVYDFAHIGN. Zn(2+) is bound by residues C219, H244, and E248. The 'KMSKS' region signature appears at 277–281; it reads KMSKS. K280 provides a ligand contact to ATP. Basic and acidic residues predominate over residues 436–452; it reads SEKGIQLKDGKDKETGE. Positions 436-461 are disordered; it reads SEKGIQLKDGKDKETGERTTTWELKR.

The protein belongs to the class-I aminoacyl-tRNA synthetase family. Monomer. Requires Zn(2+) as cofactor.

The protein localises to the cytoplasm. It catalyses the reaction tRNA(Cys) + L-cysteine + ATP = L-cysteinyl-tRNA(Cys) + AMP + diphosphate. This is Cysteine--tRNA ligase from Agrobacterium fabrum (strain C58 / ATCC 33970) (Agrobacterium tumefaciens (strain C58)).